Reading from the N-terminus, the 749-residue chain is 5-methyltetrahydropteroyltriglutamate--homocysteine methyltransferase (749 aa).

Residues 15 to 18 (RELK) and Lys114 contribute to the 5-methyltetrahydropteroyltri-L-glutamate site. Residues 425-427 (IGS) and Glu478 each bind L-homocysteine. L-methionine is bound by residues 425–427 (IGS) and Glu478. Position 555 (Trp555) interacts with 5-methyltetrahydropteroyltri-L-glutamate. Position 593 (Asp593) interacts with L-homocysteine. An L-methionine-binding site is contributed by Asp593. Position 599 (Glu599) interacts with 5-methyltetrahydropteroyltri-L-glutamate. 3 residues coordinate Zn(2+): His636, Cys638, and Glu660. Residue His689 is the Proton donor of the active site. Cys721 is a binding site for Zn(2+).

Belongs to the vitamin-B12 independent methionine synthase family. The cofactor is Zn(2+).

The enzyme catalyses 5-methyltetrahydropteroyltri-L-glutamate + L-homocysteine = tetrahydropteroyltri-L-glutamate + L-methionine. It functions in the pathway amino-acid biosynthesis; L-methionine biosynthesis via de novo pathway; L-methionine from L-homocysteine (MetE route): step 1/1. In terms of biological role, catalyzes the transfer of a methyl group from 5-methyltetrahydrofolate to homocysteine resulting in methionine formation. The polypeptide is 5-methyltetrahydropteroyltriglutamate--homocysteine methyltransferase (Streptococcus thermophilus (strain ATCC BAA-491 / LMD-9)).